Consider the following 244-residue polypeptide: NAD(P)H-quinone oxidoreductase subunit K (244 aa).

[4Fe-4S] cluster contacts are provided by Cys-60, Cys-61, Cys-125, and Cys-156. Basic and acidic residues predominate over residues 221 to 236 (SKKEKITELPENREQT). Residues 221 to 244 (SKKEKITELPENREQTEIINSEEE) form a disordered region.

It belongs to the complex I 20 kDa subunit family. In terms of assembly, NDH-1 can be composed of about 15 different subunits; different subcomplexes with different compositions have been identified which probably have different functions. The cofactor is [4Fe-4S] cluster.

The protein localises to the cellular thylakoid membrane. It catalyses the reaction a plastoquinone + NADH + (n+1) H(+)(in) = a plastoquinol + NAD(+) + n H(+)(out). The enzyme catalyses a plastoquinone + NADPH + (n+1) H(+)(in) = a plastoquinol + NADP(+) + n H(+)(out). NDH-1 shuttles electrons from an unknown electron donor, via FMN and iron-sulfur (Fe-S) centers, to quinones in the respiratory and/or the photosynthetic chain. The immediate electron acceptor for the enzyme in this species is believed to be plastoquinone. Couples the redox reaction to proton translocation, and thus conserves the redox energy in a proton gradient. Cyanobacterial NDH-1 also plays a role in inorganic carbon-concentration. This is NAD(P)H-quinone oxidoreductase subunit K from Prochlorococcus marinus (strain MIT 9312).